The following is an 81-amino-acid chain: Thrombin-like enzyme collinein-3 (81 aa).

Residue Asp4 is part of the active site. Cys51 and Cys68 form a disulfide bridge.

Monomer. Expressed by the vanom gland.

The protein localises to the secreted. Functionally, thrombin-like snake venom serine protease. This is Thrombin-like enzyme collinein-3 from Crotalus durissus collilineatus (Brazilian rattlesnake).